A 161-amino-acid polypeptide reads, in one-letter code: V-type proton ATPase subunit c (161 aa).

Residues 1-9 are Lumenal-facing; that stretch reads MSTDLCPVY. Residues 10 to 32 form a helical membrane-spanning segment; the sequence is APFFGVMGCTAAIVFASFGAAYG. Over 33–54 the chain is Cytoplasmic; the sequence is TAKAGVGISAMGVLRPDLIVKN. Residues 55-75 traverse the membrane as a helical segment; it reads TIPVVMAGIIAIYGLVVSVLI. The Lumenal portion of the chain corresponds to 76–91; it reads SGNLKQILSLYSGFIQ. The chain crosses the membrane as a helical span at residues 92–113; sequence LGAGLSVGLAGLAAGFAIGIVG. The Cytoplasmic portion of the chain corresponds to 114 to 125; that stretch reads DAGVRGTAQQPR. The chain crosses the membrane as a helical span at residues 126 to 151; the sequence is LFVAMILILIFAEVLGLYGLIVALLL. Residues 152–161 lie on the Lumenal side of the membrane; the sequence is NTRATDNVTC.

It belongs to the V-ATPase proteolipid subunit family. In terms of assembly, V-ATPase is a heteromultimeric enzyme composed of a peripheral catalytic V1 complex (components A to H) attached to an integral membrane V0 proton pore complex (components: a, c, c', c'', d, e, f and VOA1). The decameric c-ring forms the proton-conducting pore, and is composed of eight proteolipid subunits c, one subunit c' and one subunit c''.

Its subcellular location is the vacuole membrane. Its function is as follows. Proton-conducting pore forming subunit of the V0 complex of vacuolar(H+)-ATPase (V-ATPase), a multisubunit enzyme composed of a peripheral complex (V1) that hydrolyzes ATP and a membrane integral complex (V0) that translocates protons. V-ATPase is responsible for acidifying and maintaining the pH of intracellular compartments. The chain is V-type proton ATPase subunit c from Schizosaccharomyces pombe (strain 972 / ATCC 24843) (Fission yeast).